Consider the following 357-residue polypeptide: 3'(2'),5'-bisphosphate nucleotidase (357 aa).

The active-site Proton acceptor is aspartate 49. The Mg(2+) site is built by glutamate 72, aspartate 142, isoleucine 144, and aspartate 145. The active-site Proton acceptor is the threonine 147. Residues threonine 147, histidine 241, serine 264, lysine 267, arginine 281, and aspartate 294 each contribute to the adenosine 3',5'-bisphosphate site. The AMP site is built by histidine 241, serine 264, lysine 267, arginine 281, and aspartate 294. Aspartate 294 contacts Mg(2+).

This sequence belongs to the inositol monophosphatase superfamily. The cofactor is Mg(2+).

The protein localises to the cytoplasm. Its subcellular location is the nucleus. It catalyses the reaction 3'-phosphoadenylyl sulfate + H2O = adenosine 5'-phosphosulfate + phosphate. It carries out the reaction adenosine 3',5'-bisphosphate + H2O = AMP + phosphate. The enzyme catalyses adenosine 2',5'-bisphosphate + H2O = AMP + phosphate. With respect to regulation, phosphatase activity is very sensitive to lithium and moderately sensitive to sodium. The inhibitory effects of lithium and sodium are overcome by high concentrations of potassium. Lithium exerts its inhibitory action by blocking the products of the PAP hydrolysis at the active site. Functionally, phosphatase that converts adenosine 3'-phosphate 5'-phosphosulfate (PAPS) to adenosine 5'-phosphosulfate (APS) and 3'(2')-phosphoadenosine 5'-phosphate (PAP) to AMP. May regulate the flux of sulfur in the sulfur-activation pathway by converting PAPS to APS. Involved in salt tolerance. Confers resistance to lithium. Shows no activity on inositol mono- and diphosphates, 3'-AMP, AMP, nicotinamide adenine dinucleotide phosphate (NADP), and p-nitrophenylphosphate. The polypeptide is 3'(2'),5'-bisphosphate nucleotidase (MET22) (Saccharomyces cerevisiae (strain ATCC 204508 / S288c) (Baker's yeast)).